The following is a 205-amino-acid chain: Putative 3-methyladenine DNA glycosylase (205 aa).

This sequence belongs to the DNA glycosylase MPG family.

This is Putative 3-methyladenine DNA glycosylase from Clostridium perfringens (strain 13 / Type A).